The chain runs to 529 residues: Peptide chain release factor 3 (529 aa).

In terms of domain architecture, tr-type G spans 11–280 (KKRRTFAIIS…GLVEWAPAPL (270 aa)). GTP is bound by residues 20–27 (SHPDAGKT), 88–92 (DTPGH), and 142–145 (NKLD).

The protein belongs to the TRAFAC class translation factor GTPase superfamily. Classic translation factor GTPase family. PrfC subfamily.

Its subcellular location is the cytoplasm. Its function is as follows. Increases the formation of ribosomal termination complexes and stimulates activities of RF-1 and RF-2. It binds guanine nucleotides and has strong preference for UGA stop codons. It may interact directly with the ribosome. The stimulation of RF-1 and RF-2 is significantly reduced by GTP and GDP, but not by GMP. This is Peptide chain release factor 3 from Alteromonas mediterranea (strain DSM 17117 / CIP 110805 / LMG 28347 / Deep ecotype).